The following is a 379-amino-acid chain: MKNEMLALILAGGQGTRLGKLTQNIAKPAVQFGGRYRIIDFALSNCANSGIDNVGVITQYQPLVLNSHIGNGSSWGLEGINRGVTILQPFSATEGNKWFEGTSHAIYQNIDYIDSINPEYVLILSGDHIYKMDYEEMLQVHKDNMASLTVAVLDVPLKEASRFGIMNTDSNDRIVEFEEKPEHPKSTKASMGIYIFNWPRLRKMLVDSENGNIDMSDFGKNVIPAYLESGERVYTYNFNGYWKDVGTIESLWEANMEYIAENNPLDSRNRSWKIYSKNHIAPPNFISEHAEVTDSLVVDGCFVTGKVDHSILSANVHMKQGAEIKDSFIMSGAVIGEGAKINRAIIGEGAIIGNNVVIDGTDEIQVVGYNEVVGVSNEN.

Alpha-D-glucose 1-phosphate is bound by residues G164, E179 to K180, and S190.

This sequence belongs to the bacterial/plant glucose-1-phosphate adenylyltransferase family. In terms of assembly, homotetramer.

It catalyses the reaction alpha-D-glucose 1-phosphate + ATP + H(+) = ADP-alpha-D-glucose + diphosphate. It participates in glycan biosynthesis; glycogen biosynthesis. Functionally, involved in the biosynthesis of ADP-glucose, a building block required for the elongation reactions to produce glycogen. Catalyzes the reaction between ATP and alpha-D-glucose 1-phosphate (G1P) to produce pyrophosphate and ADP-Glc. This Streptococcus uberis (strain ATCC BAA-854 / 0140J) protein is Glucose-1-phosphate adenylyltransferase.